A 293-amino-acid chain; its full sequence is 4-hydroxy-tetrahydrodipicolinate synthase (293 aa).

Threonine 45 contributes to the pyruvate binding site. The active-site Proton donor/acceptor is the tyrosine 133. Lysine 162 (schiff-base intermediate with substrate) is an active-site residue. Isoleucine 204 contacts pyruvate.

Belongs to the DapA family. Homotetramer; dimer of dimers.

It is found in the cytoplasm. It catalyses the reaction L-aspartate 4-semialdehyde + pyruvate = (2S,4S)-4-hydroxy-2,3,4,5-tetrahydrodipicolinate + H2O + H(+). The protein operates within amino-acid biosynthesis; L-lysine biosynthesis via DAP pathway; (S)-tetrahydrodipicolinate from L-aspartate: step 3/4. Its function is as follows. Catalyzes the condensation of (S)-aspartate-beta-semialdehyde [(S)-ASA] and pyruvate to 4-hydroxy-tetrahydrodipicolinate (HTPA). This chain is 4-hydroxy-tetrahydrodipicolinate synthase, found in Brucella suis biovar 1 (strain 1330).